Reading from the N-terminus, the 262-residue chain is Dihydroorotate dehydrogenase B (NAD(+)), electron transfer subunit (262 aa).

The region spanning Gln3–Val104 is the FAD-binding FR-type domain. FAD is bound by residues Arg53–Ser56, Leu70–Arg72, and Gly79–Thr80. Residues Cys226, Cys231, Cys234, and Cys249 each coordinate [2Fe-2S] cluster.

Belongs to the PyrK family. As to quaternary structure, heterotetramer of 2 PyrK and 2 PyrD type B subunits. Requires [2Fe-2S] cluster as cofactor. The cofactor is FAD.

It participates in pyrimidine metabolism; UMP biosynthesis via de novo pathway; orotate from (S)-dihydroorotate (NAD(+) route): step 1/1. Responsible for channeling the electrons from the oxidation of dihydroorotate from the FMN redox center in the PyrD type B subunit to the ultimate electron acceptor NAD(+). The polypeptide is Dihydroorotate dehydrogenase B (NAD(+)), electron transfer subunit (Lactococcus lactis subsp. cremoris (strain SK11)).